Consider the following 93-residue polypeptide: ATP synthase subunit c (93 aa).

2 helical membrane-spanning segments follow: residues 13–33 (AIGVGIAIGVAACGGGIGMGI) and 58–78 (ISLAMIEAQVIYALVIVFILL).

Belongs to the ATPase C chain family. F-type ATPases have 2 components, F(1) - the catalytic core - and F(0) - the membrane proton channel. F(1) has five subunits: alpha(3), beta(3), gamma(1), delta(1), epsilon(1). F(0) has three main subunits: a(1), b(2) and c(10-14). The alpha and beta chains form an alternating ring which encloses part of the gamma chain. F(1) is attached to F(0) by a central stalk formed by the gamma and epsilon chains, while a peripheral stalk is formed by the delta and b chains.

It localises to the cell inner membrane. In terms of biological role, f(1)F(0) ATP synthase produces ATP from ADP in the presence of a proton or sodium gradient. F-type ATPases consist of two structural domains, F(1) containing the extramembraneous catalytic core and F(0) containing the membrane proton channel, linked together by a central stalk and a peripheral stalk. During catalysis, ATP synthesis in the catalytic domain of F(1) is coupled via a rotary mechanism of the central stalk subunits to proton translocation. Its function is as follows. Key component of the F(0) channel; it plays a direct role in translocation across the membrane. A homomeric c-ring of between 10-14 subunits forms the central stalk rotor element with the F(1) delta and epsilon subunits. The sequence is that of ATP synthase subunit c from Campylobacter hominis (strain ATCC BAA-381 / DSM 21671 / CCUG 45161 / LMG 19568 / NCTC 13146 / CH001A).